The sequence spans 337 residues: MRNITTSAYTPTEFTIENISDTVAKISAWPFEIGYGITLAHPLRRLLYTSTIGYAPTAIHIDGVAHEFDSMRGMLEDVALFIINLKKLRFKIKGDSNKEIVEFSFKGSKEIYGKDLNNDQVEVVNKDAYLATINEDAELKFTLIVEKGIGYVPSEEIKELINDPKFIALDAFFTPVREATYDIEKVLFEDNPDYEKVVLTVTTDGQITPNEAFQNALEAMYKQLSVFDKITNVRSVIKNQATSNELENTKLLQNITDLNLSARSYNCLEKAGVVYIGELALMSVSELAGLKNLGKKSLDEIKNIMESIGFPVGTSKLSDNKEILKNKIAELKAQNEG.

An alpha N-terminal domain (alpha-NTD) region spans residues 1 to 231 (MRNITTSAYT…KQLSVFDKIT (231 aa)). Residues 247-337 (ENTKLLQNIT…IAELKAQNEG (91 aa)) are alpha C-terminal domain (alpha-CTD).

Belongs to the RNA polymerase alpha chain family. As to quaternary structure, homodimer. The RNAP catalytic core consists of 2 alpha, 1 beta, 1 beta' and 1 omega subunit. When a sigma factor is associated with the core the holoenzyme is formed, which can initiate transcription.

The catalysed reaction is RNA(n) + a ribonucleoside 5'-triphosphate = RNA(n+1) + diphosphate. DNA-dependent RNA polymerase catalyzes the transcription of DNA into RNA using the four ribonucleoside triphosphates as substrates. This is DNA-directed RNA polymerase subunit alpha from Campylobacter jejuni subsp. jejuni serotype O:2 (strain ATCC 700819 / NCTC 11168).